A 79-amino-acid polypeptide reads, in one-letter code: MGASDKFIGFVMVLFRIFVFGYYTTWVIITPFIVSDHWIQQYFLPREYGIIIPLVLLVVGITAIGTFLGLVMIKSKKNK.

Transmembrane regions (helical) follow at residues 8 to 28 and 50 to 70; these read IGFV…TWVI and IIIP…FLGL.

Belongs to the DPM2 family. Component of the dolichol-phosphate mannose (DPM) synthase complex composed of dpm1, dpm2 and dpm3.

Its subcellular location is the endoplasmic reticulum membrane. The protein operates within protein modification; protein glycosylation. Its function is as follows. Regulates the biosynthesis of dolichol phosphate-mannose. Regulatory subunit of the dolichol-phosphate mannose (DPM) synthase complex; essential for the ER localization and stable expression of dpm1. This is Dolichol phosphate-mannose biosynthesis regulatory protein (dpm2-1) from Dictyostelium discoideum (Social amoeba).